We begin with the raw amino-acid sequence, 629 residues long: Phosphomethylpyrimidine synthase (629 aa).

Residues asparagine 215, methionine 244, tyrosine 273, histidine 309, 329 to 331, 370 to 373, and glutamate 409 each bind substrate; these read SRG and DGLR. Histidine 413 provides a ligand contact to Zn(2+). Tyrosine 436 lines the substrate pocket. Position 477 (histidine 477) interacts with Zn(2+). 3 residues coordinate [4Fe-4S] cluster: cysteine 557, cysteine 560, and cysteine 565. Residues 589 to 610 form a disordered region; that stretch reads ENIKRETSAEEAEEAREGMSDM.

It belongs to the ThiC family. In terms of assembly, homodimer. [4Fe-4S] cluster serves as cofactor.

The catalysed reaction is 5-amino-1-(5-phospho-beta-D-ribosyl)imidazole + S-adenosyl-L-methionine = 4-amino-2-methyl-5-(phosphooxymethyl)pyrimidine + CO + 5'-deoxyadenosine + formate + L-methionine + 3 H(+). It functions in the pathway cofactor biosynthesis; thiamine diphosphate biosynthesis. Its function is as follows. Catalyzes the synthesis of the hydroxymethylpyrimidine phosphate (HMP-P) moiety of thiamine from aminoimidazole ribotide (AIR) in a radical S-adenosyl-L-methionine (SAM)-dependent reaction. The protein is Phosphomethylpyrimidine synthase of Erythrobacter litoralis (strain HTCC2594).